Here is a 479-residue protein sequence, read N- to C-terminus: Cardiolipin synthase (479 aa).

The next 2 membrane-spanning stretches (helical) occupy residues 5-25 and 34-54; these read SLLLGLTFVLNIALAISIIFL and WAWVMVLLFIPILGFFLYLIF. PLD phosphodiesterase domains follow at residues 216-243 and 392-419; these read INYRNHRKLAIIDGYIGYLGGFNVGDEY and QNGFLHAKTIIVDGRIASVGTANIDVRS. Residues histidine 221, lysine 223, aspartate 228, histidine 397, lysine 399, and aspartate 404 contribute to the active site.

The protein belongs to the phospholipase D family. Cardiolipin synthase subfamily.

The protein localises to the cell membrane. It carries out the reaction 2 a 1,2-diacyl-sn-glycero-3-phospho-(1'-sn-glycerol) = a cardiolipin + glycerol. Its function is as follows. Catalyzes the reversible phosphatidyl group transfer from one phosphatidylglycerol molecule to another to form cardiolipin (CL) (diphosphatidylglycerol) and glycerol. This is Cardiolipin synthase (cls) from Oceanobacillus iheyensis (strain DSM 14371 / CIP 107618 / JCM 11309 / KCTC 3954 / HTE831).